Consider the following 441-residue polypeptide: MGSSHLLNKGLPLGVRPPIMNGPMHPRPLVALLDGRDCTVEMPILKDVATVAFCDAQSTQEIHEKVLNEAVGALMYHTITLTREDLEKFKALRIIVRIGSGFDNIDIKSAGDLGIAVCNVPAASVEETADSTLCHILNLYRRTTWLHQALREGTRVQSVEQIREVASGAARIRGETLGIIGLGRVGQAVALRAKAFGFNVLFYDPYLSDGIERALGLQRVSTLQDLLFHSDCVTLHCGLNEHNHHLINDFTVKQMRQGAFLVNTARGGLVDEKALAQALKEGRIRGAALDVHESEPFSFSQGPLKDAPNLICTPHAAWYSEQASIEMREEAAREIRRAITGRIPDSLKNCVNKDHLTAATHWASMDPAVVHPELNGAAYSRYPPGVVSVAPTGIPAAVEGIVPSAMSLSHGLPPVAHPPHAPSPGQTVKPEADRDHTSDQL.

An interaction with GLIS2 1 region spans residues 1 to 70 (MGSSHLLNKG…EIHEKVLNEA (70 aa)). NAD(+) is bound by residues S100, 180–185 (IGLGRV), D204, 237–243 (CGLNEHN), 264–266 (TAR), and D290. R266 is a catalytic residue. Positions 288–360 (ALDVHESEPF…VNKDHLTAAT (73 aa)) are interaction with GLIS2 2. Residue E295 is part of the active site. The residue at position 300 (S300) is a Phosphoserine. Catalysis depends on H315, which acts as the Proton donor. 315-318 (HAAW) contributes to the NAD(+) binding site. Residues 409–441 (SHGLPPVAHPPHAPSPGQTVKPEADRDHTSDQL) are disordered. S423 carries the phosphoserine modification. Residue K429 forms a Glycyl lysine isopeptide (Lys-Gly) (interchain with G-Cter in SUMO) linkage. Positions 430-441 (PEADRDHTSDQL) are enriched in basic and acidic residues.

Belongs to the D-isomer specific 2-hydroxyacid dehydrogenase family. As to quaternary structure, homo- or heterodimer. Heterodimer with CTBP2. Interacts with ELK3 (via its PXDLS motif). Interacts with RBBP8 (via its PXDLS motif). Interacts with PNN, MECOM and ZFHX1B. Interacts with ZNF366 (via PXDLS motif). Interaction with SATB1 (non-acetylated form); the interaction stabilizes its attachment to DNA and promotes transcription repression. Interacts with PRDM16; the interaction represses white adipose tissue (WAT)-specific genes expression. Interacts with GLIS2, HIPK2, FOXP1, FOXP2, HDAC4, HDAC5, HDAC9, NRIP1, WIZ and ZNF217. Interacts with BCL6; the interaction is required for BCL6 transcriptional autoinhibition and inhibition of some BCL6 target genes. Interacts with IKZF4. Interacts with MCRIP1 (unphosphorylated form, via the PXDLS motif); competitively inhibiting CTBP-ZEB1 interaction. Interacts with Bassoon/BSN; this interaction targets and anchors CTBP1 to presynapses. Interacts with SIMC1. Requires NAD(+) as cofactor. ADP-ribosylated; when cells are exposed to brefeldin A. In terms of processing, the level of phosphorylation appears to be regulated during the cell cycle. Phosphorylation by HIPK2 on Ser-423 induces proteasomal degradation. Post-translationally, sumoylation on Lys-429 is promoted by the E3 SUMO-protein ligase CBX4. Expressed in a wide range of adult tissues.

The protein localises to the cytoplasm. The protein resides in the nucleus. Corepressor targeting diverse transcription regulators such as GLIS2 or BCL6. Has dehydrogenase activity. Involved in controlling the equilibrium between tubular and stacked structures in the Golgi complex. Functions in brown adipose tissue (BAT) differentiation. In Mus musculus (Mouse), this protein is C-terminal-binding protein 1 (Ctbp1).